A 358-amino-acid polypeptide reads, in one-letter code: Phenylalanine--tRNA ligase alpha subunit (358 aa).

Position 279 (E279) interacts with Mg(2+).

This sequence belongs to the class-II aminoacyl-tRNA synthetase family. Phe-tRNA synthetase alpha subunit type 1 subfamily. Tetramer of two alpha and two beta subunits. It depends on Mg(2+) as a cofactor.

Its subcellular location is the cytoplasm. The enzyme catalyses tRNA(Phe) + L-phenylalanine + ATP = L-phenylalanyl-tRNA(Phe) + AMP + diphosphate + H(+). The chain is Phenylalanine--tRNA ligase alpha subunit from Variovorax paradoxus (strain S110).